The chain runs to 322 residues: tRNA (guanine-N(7)-)-methyltransferase (322 aa).

S-adenosyl-L-methionine contacts are provided by Glu-29, Glu-55, and Asp-105. Residue Asp-105 is part of the active site. Positions 109 and 141 each coordinate substrate.

This sequence belongs to the class I-like SAM-binding methyltransferase superfamily. TrmB family.

The catalysed reaction is guanosine(46) in tRNA + S-adenosyl-L-methionine = N(7)-methylguanosine(46) in tRNA + S-adenosyl-L-homocysteine. It participates in tRNA modification; N(7)-methylguanine-tRNA biosynthesis. Its function is as follows. Catalyzes the formation of N(7)-methylguanine at position 46 (m7G46) in tRNA. The chain is tRNA (guanine-N(7)-)-methyltransferase from Deinococcus radiodurans (strain ATCC 13939 / DSM 20539 / JCM 16871 / CCUG 27074 / LMG 4051 / NBRC 15346 / NCIMB 9279 / VKM B-1422 / R1).